Reading from the N-terminus, the 131-residue chain is MSWQAYVDEHLMCEIEGHHLTSAAIVGHDGAAWAQSTAFPEFKTEDMANIMKDFDEPGHLAPTGLFLGPTKYMVIQGEPGAVIRGKKGSGGITVKKTGQALVVGIYDEPMTPGQCNMVVERLGDYLLKQGL.

A disulfide bridge connects residues Cys-13 and Cys-115. Residues 81–97 (AVIRGKKGSGGITVKKT) carry the Involved in PIP2 interaction motif. Residue Thr-111 is modified to Phosphothreonine.

It belongs to the profilin family. In terms of assembly, occurs in many kinds of cells as a complex with monomeric actin in a 1:1 ratio. Phosphorylated by MAP kinases.

It is found in the cytoplasm. The protein resides in the cytoskeleton. Functionally, binds to actin and affects the structure of the cytoskeleton. At high concentrations, profilin prevents the polymerization of actin, whereas it enhances it at low concentrations. This Zea mays (Maize) protein is Profilin-8.